The following is a 100-amino-acid chain: Urease subunit gamma (100 aa).

It belongs to the urease gamma subunit family. In terms of assembly, heterotrimer of UreA (gamma), UreB (beta) and UreC (alpha) subunits. Three heterotrimers associate to form the active enzyme.

It localises to the cytoplasm. It carries out the reaction urea + 2 H2O + H(+) = hydrogencarbonate + 2 NH4(+). It participates in nitrogen metabolism; urea degradation; CO(2) and NH(3) from urea (urease route): step 1/1. This Mycobacterium sp. (strain JLS) protein is Urease subunit gamma.